The primary structure comprises 326 residues: UDP-3-O-acylglucosamine N-acyltransferase (326 aa).

His225 (proton acceptor) is an active-site residue.

It belongs to the transferase hexapeptide repeat family. LpxD subfamily. As to quaternary structure, homotrimer.

It carries out the reaction a UDP-3-O-[(3R)-3-hydroxyacyl]-alpha-D-glucosamine + a (3R)-hydroxyacyl-[ACP] = a UDP-2-N,3-O-bis[(3R)-3-hydroxyacyl]-alpha-D-glucosamine + holo-[ACP] + H(+). It functions in the pathway bacterial outer membrane biogenesis; LPS lipid A biosynthesis. In terms of biological role, catalyzes the N-acylation of UDP-3-O-acylglucosamine using 3-hydroxyacyl-ACP as the acyl donor. Is involved in the biosynthesis of lipid A, a phosphorylated glycolipid that anchors the lipopolysaccharide to the outer membrane of the cell. This Verminephrobacter eiseniae (strain EF01-2) protein is UDP-3-O-acylglucosamine N-acyltransferase.